The primary structure comprises 413 residues: 4-hydroxy-3-methylbut-2-en-1-yl diphosphate synthase (flavodoxin) (413 aa).

Residues Cys-305, Cys-308, Cys-351, and Glu-358 each contribute to the [4Fe-4S] cluster site.

The protein belongs to the IspG family. The cofactor is [4Fe-4S] cluster.

It catalyses the reaction (2E)-4-hydroxy-3-methylbut-2-enyl diphosphate + oxidized [flavodoxin] + H2O + 2 H(+) = 2-C-methyl-D-erythritol 2,4-cyclic diphosphate + reduced [flavodoxin]. It participates in isoprenoid biosynthesis; isopentenyl diphosphate biosynthesis via DXP pathway; isopentenyl diphosphate from 1-deoxy-D-xylulose 5-phosphate: step 5/6. Functionally, converts 2C-methyl-D-erythritol 2,4-cyclodiphosphate (ME-2,4cPP) into 1-hydroxy-2-methyl-2-(E)-butenyl 4-diphosphate. The protein is 4-hydroxy-3-methylbut-2-en-1-yl diphosphate synthase (flavodoxin) of Bartonella tribocorum (strain CIP 105476 / IBS 506).